The sequence spans 261 residues: 3-methyl-2-oxobutanoate hydroxymethyltransferase (261 aa).

Mg(2+) contacts are provided by aspartate 44 and aspartate 83. 3-methyl-2-oxobutanoate contacts are provided by residues aspartate 44–serine 45, aspartate 83, and lysine 112. Glutamate 114 contributes to the Mg(2+) binding site. The active-site Proton acceptor is glutamate 181.

This sequence belongs to the PanB family. As to quaternary structure, homodecamer; pentamer of dimers. Mg(2+) is required as a cofactor.

It is found in the cytoplasm. It carries out the reaction 3-methyl-2-oxobutanoate + (6R)-5,10-methylene-5,6,7,8-tetrahydrofolate + H2O = 2-dehydropantoate + (6S)-5,6,7,8-tetrahydrofolate. The protein operates within cofactor biosynthesis; (R)-pantothenate biosynthesis; (R)-pantoate from 3-methyl-2-oxobutanoate: step 1/2. Its function is as follows. Catalyzes the reversible reaction in which hydroxymethyl group from 5,10-methylenetetrahydrofolate is transferred onto alpha-ketoisovalerate to form ketopantoate. The polypeptide is 3-methyl-2-oxobutanoate hydroxymethyltransferase (Acidithiobacillus ferrooxidans (strain ATCC 23270 / DSM 14882 / CIP 104768 / NCIMB 8455) (Ferrobacillus ferrooxidans (strain ATCC 23270))).